A 467-amino-acid polypeptide reads, in one-letter code: Involucrin (467 aa).

Residues 48 to 467 (EIQEKGFPKH…ELENRTQQEK (420 aa)) are disordered. Over residues 49-75 (IQEKGFPKHEEKRPNPVKDLPDQKCEH) the composition is skewed to basic and acidic residues. Low complexity-rich tracts occupy residues 76–95 (QQQP…QQEL) and 105–177 (QQLP…VPQE). Basic and acidic residues-rich tracts occupy residues 178–192 (LHLR…DPEL) and 220–231 (RHQEPQEQELHL). Over residues 278 to 290 (QQQQESPEPELQL) the composition is skewed to low complexity. 5 stretches are compositionally biased toward basic and acidic residues: residues 295–318 (QSHE…ELYL), 348–373 (LEEK…HEPD), 380–391 (EKQKLGEPELHL), 415–437 (KQEK…KELS), and 450–467 (KQLE…QQEK).

This sequence belongs to the involucrin family. In terms of assembly, directly or indirectly cross-linked to cornifelin (CNFN). In terms of processing, substrate of transglutaminase. Specific glutamines or lysines are cross-linked to keratins, desmoplakin and to inter involucrin molecules. Keratinocytes of epidermis and other stratified squamous epithelia.

It localises to the cytoplasm. Functionally, part of the insoluble cornified cell envelope (CE) of stratified squamous epithelia. In Mus musculus (Mouse), this protein is Involucrin (Ivl).